A 159-amino-acid polypeptide reads, in one-letter code: GDP-mannose mannosyl hydrolase (159 aa).

Substrate is bound by residues 2–3, Phe-8, and Arg-36; that span reads FL. The 141-residue stretch at 13-153 folds into the Nudix hydrolase domain; sequence RSTPLVSLDF…SRAYFLAEKR (141 aa). Residues Gly-49, Glu-69, and Gln-122 each contribute to the Mg(2+) site. The short motif at 50–71 is the Nudix box element; sequence GRVQKDETLEAAFERLTMAELG.

As to quaternary structure, homodimer. Mg(2+) serves as cofactor.

It catalyses the reaction GDP-alpha-D-mannose + H2O = D-mannose + GDP + H(+). Its function is as follows. Hydrolyzes both GDP-mannose and GDP-glucose. Could participate in the regulation of cell wall biosynthesis by influencing the concentration of GDP-mannose or GDP-glucose in the cell. Might also be involved in the biosynthesis of the slime polysaccharide colanic acid. This Escherichia coli (strain K12) protein is GDP-mannose mannosyl hydrolase.